A 64-amino-acid polypeptide reads, in one-letter code: UPF0434 protein Bmul_0750/BMULJ_02510 (64 aa).

Belongs to the UPF0434 family.

The chain is UPF0434 protein Bmul_0750/BMULJ_02510 from Burkholderia multivorans (strain ATCC 17616 / 249).